A 326-amino-acid chain; its full sequence is Probable iron chelatin transport system permease protein HP_0889 (326 aa).

A run of 10 helical transmembrane segments spans residues 7–27 (IALACVILAVVVLLFGGESLS), 64–84 (ILALLVGASLSGSGVVMQTIF), 91–111 (PFLLGISSGAMLGVAMAIAVV), 113–133 (SNIAILAFFGAILASLAVLAM), 142–162 (LSLVLSGVVLSAFLSALAGAI), 164–184 (FFVIPQKAQAIVVWLLGSLSL), 187–207 (YKDCLIAFIGLSLGFIPLFLL), 241–261 (VASALAVSVSGTIGWIGLVIP), 275–295 (LLLSSLLMGAFFLLLADVVAK), and 301–321 (DLPVGIATSVLGAPFFLWLLF).

Belongs to the binding-protein-dependent transport system permease family. FecCD subfamily.

It localises to the cell inner membrane. Its function is as follows. Part of a binding-protein-dependent transport system for an iron chelatin; probably responsible for the translocation of the substrate across the membrane. The sequence is that of Probable iron chelatin transport system permease protein HP_0889 from Helicobacter pylori (strain ATCC 700392 / 26695) (Campylobacter pylori).